Here is a 295-residue protein sequence, read N- to C-terminus: Probable adenylate kinase 6, chloroplastic (295 aa).

The transit peptide at 1 to 46 directs the protein to the chloroplast; that stretch reads MAVSHRLLRPATTTIKNTFSSLFIRSLSSSSSGSSLDPKIDLEEAA. 74-79 is a binding site for ATP; sequence GVGKGT. Residues 94-123 are NMP; the sequence is ATGDLVREELSSSGLLSSQLKELVNHGKLV. AMP-binding positions include Thr-95, Arg-100, 121 to 123, 151 to 154, and Gln-158; these read KLV and GFPR. The LID stretch occupies residues 187 to 235; sequence GRRICSECGGNYNVACIDIKGDDDTPRMYMPPLLPPPNCESKLISRADD. Arg-188 contributes to the ATP binding site. Residue Arg-243 coordinates AMP. Gly-271 provides a ligand contact to ATP.

It belongs to the adenylate kinase family. In terms of assembly, monomer.

The protein resides in the plastid. The protein localises to the chloroplast. The enzyme catalyses AMP + ATP = 2 ADP. Its function is as follows. Catalyzes the reversible transfer of the terminal phosphate group between ATP and AMP. Plays an important role in cellular energy homeostasis and in adenine nucleotide metabolism. This chain is Probable adenylate kinase 6, chloroplastic, found in Arabidopsis thaliana (Mouse-ear cress).